Consider the following 158-residue polypeptide: uncharacterized protein (158 aa).

Positions 1-30 (MNKKFLKCGTLFLISCSILGSTIPAVTVFS) are cleaved as a signal peptide.

This is an uncharacterized protein from Streptococcus pneumoniae serotype 2 (strain D39 / NCTC 7466).